The sequence spans 235 residues: MHYERILLKLSGEALMGNRQYGIDPERLAEYAAEIKSVVDKGVEVAIVIGGGNIFRGVAGASRGMDRVQGDHMGMLATVINGLALQSALEDANIQTRLQSAIKINEVAEPFIRRKAIRHLEKGRVVIFGGGTGNPYFTTDSAAVLRAIEIKADVILKGTRVDGIYTSDPEKNKEATKFDFITFEDVIKKGLKVMDTTAFTLSQENELPIIVFDMNKPGNLLKVATGERVGTKVNL.

Lysine 9–glycine 12 is an ATP binding site. Glycine 51 serves as a coordination point for UMP. Residues glycine 52 and arginine 56 each contribute to the ATP site. UMP is bound by residues aspartate 71 and threonine 132–threonine 139. The ATP site is built by threonine 159, tyrosine 165, and aspartate 168.

This sequence belongs to the UMP kinase family. In terms of assembly, homohexamer.

It is found in the cytoplasm. It carries out the reaction UMP + ATP = UDP + ADP. It functions in the pathway pyrimidine metabolism; CTP biosynthesis via de novo pathway; UDP from UMP (UMPK route): step 1/1. With respect to regulation, inhibited by UTP. Its function is as follows. Catalyzes the reversible phosphorylation of UMP to UDP. This chain is Uridylate kinase, found in Christiangramia forsetii (strain DSM 17595 / CGMCC 1.15422 / KT0803) (Gramella forsetii).